The primary structure comprises 500 residues: Cysteine--tRNA ligase (500 aa).

Residue C29 participates in Zn(2+) binding. The short motif at 31 to 41 (VTVYDLCHLGH) is the 'HIGH' region element. Zn(2+)-binding residues include C213, H238, and E242. The 'KMSKS' region signature appears at 270–274 (KMSKS). K273 serves as a coordination point for ATP.

Belongs to the class-I aminoacyl-tRNA synthetase family. Monomer. Zn(2+) serves as cofactor.

It localises to the cytoplasm. It carries out the reaction tRNA(Cys) + L-cysteine + ATP = L-cysteinyl-tRNA(Cys) + AMP + diphosphate. In Prochlorococcus marinus (strain NATL1A), this protein is Cysteine--tRNA ligase.